The chain runs to 139 residues: Aspartate 1-decarboxylase (139 aa).

The Schiff-base intermediate with substrate; via pyruvic acid role is filled by Ser-25. A Pyruvic acid (Ser) modification is found at Ser-25. Thr-57 contributes to the substrate binding site. The Proton donor role is filled by Tyr-58. A substrate-binding site is contributed by 73 to 75 (GAA). Residues 116–139 (ELGEDPAHAPAGSGLKDPRHPEGE) are disordered.

The protein belongs to the PanD family. Heterooctamer of four alpha and four beta subunits. Requires pyruvate as cofactor. In terms of processing, is synthesized initially as an inactive proenzyme, which is activated by self-cleavage at a specific serine bond to produce a beta-subunit with a hydroxyl group at its C-terminus and an alpha-subunit with a pyruvoyl group at its N-terminus.

The protein localises to the cytoplasm. It carries out the reaction L-aspartate + H(+) = beta-alanine + CO2. Its pathway is cofactor biosynthesis; (R)-pantothenate biosynthesis; beta-alanine from L-aspartate: step 1/1. In terms of biological role, catalyzes the pyruvoyl-dependent decarboxylation of aspartate to produce beta-alanine. The polypeptide is Aspartate 1-decarboxylase (Corynebacterium urealyticum (strain ATCC 43042 / DSM 7109)).